We begin with the raw amino-acid sequence, 718 residues long: Heme peroxidase 2 (718 aa).

An N-terminal signal peptide occupies residues methionine 1–threonine 19. A propeptide spanning residues phenylalanine 20–proline 146 is cleaved from the precursor. 2 disordered regions span residues arginine 41–aspartate 64 and leucine 108–serine 144. Polar residues predominate over residues asparagine 45–aspartate 64. The segment covering leucine 109–threonine 118 has biased composition (low complexity). Positions serine 126–asparagine 139 are enriched in basic residues. An intrachain disulfide couples cysteine 149 to cysteine 164. The active-site Proton acceptor is the histidine 241. A Ca(2+)-binding site is contributed by aspartate 242. A disulfide bridge connects residues cysteine 262 and cysteine 272. Serine 311, phenylalanine 313, aspartate 315, and serine 317 together coordinate Ca(2+). An N-linked (GlcNAc...) asparagine glycan is attached at asparagine 354. The cysteines at positions 358 and 366 are disulfide-linked. Histidine 477 provides a ligand contact to heme b. Residues asparagine 551, asparagine 592, asparagine 662, and asparagine 673 are each glycosylated (N-linked (GlcNAc...) asparagine). The cysteines at positions 682 and 705 are disulfide-linked.

Belongs to the peroxidase family. The cofactor is heme b. As to expression, expressed in the hypodermis and gland cells of the pharynx. Specifically, there is low and transient expression from the distal bulb of the pharynx to the anterior of the buccal cavity. Whole body expression levels increase upon entry into the dauer phase.

It localises to the secreted. It catalyses the reaction 2 a phenolic donor + H2O2 = 2 a phenolic radical donor + 2 H2O. Functionally, peroxidase which is involved in maintaining the cuticle integrity in the hypodermis and pharynx. It thus plays a role in conferring resistance against Gram-positive bacteria such as E.faecalis, S.aureus and C.diphtheriae, and yeast such as C.albicans. In Caenorhabditis elegans, this protein is Heme peroxidase 2.